A 108-amino-acid polypeptide reads, in one-letter code: Heme oxygenase (staphylobilin-producing) 2 (108 aa).

In terms of domain architecture, ABM spans 2 to 93 (FMAENRLQLQ…DDDGQQSPIL (92 aa)). Asn6 provides a ligand contact to Fe cation. Residues 21 to 28 (RFYNRQGI) and His76 contribute to the heme site.

The protein belongs to the antibiotic biosynthesis monooxygenase family. Heme-degrading monooxygenase IsdG subfamily. Homodimer.

The protein localises to the cytoplasm. It catalyses the reaction heme b + 5 AH2 + 4 O2 + 2 H(+) = delta-staphylobilin + Fe(2+) + formaldehyde + 5 A + 4 H2O. It carries out the reaction heme b + 5 AH2 + 4 O2 + 2 H(+) = beta-staphylobilin + Fe(2+) + formaldehyde + 5 A + 4 H2O. In terms of biological role, allows bacterial pathogens to use the host heme as an iron source. Catalyzes the oxidative degradation of the heme macrocyclic porphyrin ring to the oxo-bilirubin chromophore staphylobilin (a mixture of the linear tetrapyrroles 5-oxo-delta-bilirubin and 15-oxo-beta-bilirubin) in the presence of a suitable electron donor such as ascorbate or NADPH--cytochrome P450 reductase, with subsequent release of free iron. The sequence is that of Heme oxygenase (staphylobilin-producing) 2 (isdI) from Staphylococcus aureus (strain MRSA252).